A 575-amino-acid polypeptide reads, in one-letter code: Sclareol synthase, chloroplastic (575 aa).

The transit peptide at 1 to 51 (MSLAFNVGVTPFSGQRVGSRKEKFPVQGFPVTTPNRSRLIVNCSLTTIDFM) directs the protein to the chloroplast. Mg(2+)-binding residues include aspartate 329, aspartate 333, asparagine 473, serine 477, and glutamate 481. The DDXXD motif motif lies at 329–333 (DDFFD).

The protein belongs to the terpene synthase family.

It is found in the plastid. It localises to the chloroplast. The catalysed reaction is 8-hydroxycopalyl diphosphate + H2O = sclareol + diphosphate. Its pathway is secondary metabolite biosynthesis; terpenoid biosynthesis. Its function is as follows. Involved in the biosynthesis of labdane-type diterpenoid including sclareol, a diterpene-diol that is used as fragrance and flavoring, and has anticancer effects (able to kill leukemic and colon cancer cells by apoptosis). Sclareol can also be used as synthesis precursor of ambergris substitution fragance products such as ambrox. Terpene synthase that catalyzes the conversion of 8-hydroxy-copalyl diphosphate to sclareol. This Salvia sclarea (Clary sage) protein is Sclareol synthase, chloroplastic.